Consider the following 73-residue polypeptide: Disintegrin lachesin (73 aa).

The region spanning 1-73 (EAGEECDCGA…ADCPRNGYYG (73 aa)) is the Disintegrin domain. Cystine bridges form between Cys6/Cys21, Cys8/Cys16, Cys15/Cys38, Cys29/Cys35, Cys34/Cys59, and Cys47/Cys66. A Cell attachment site motif is present at residues 51-53 (RGD). The interval 51-73 (RGDNPDDRCTGQSADCPRNGYYG) is disordered.

It belongs to the venom metalloproteinase (M12B) family. P-II subfamily. P-IIa sub-subfamily. As to quaternary structure, monomer (disintegrin). Expressed by the venom gland.

It localises to the secreted. In terms of biological role, inhibits fibrinogen interaction with platelets. Acts by binding to alpha-IIb/beta-3 (ITGA2B/ITGB3) on the platelet surface and inhibits aggregation induced by ADP, thrombin, platelet-activating factor and collagen. This Lachesis muta muta (Bushmaster) protein is Disintegrin lachesin.